Consider the following 196-residue polypeptide: Adenylate kinase (196 aa).

Gly-10 to Thr-15 is a binding site for ATP. Residues Ser-30 to Val-59 form an NMP region. Residues Thr-31, Arg-36, Gly-57–Val-59, Gly-85–Arg-88, and Gln-92 each bind AMP. Positions Asn-126–Asp-142 are LID. Position 127 (Arg-127) interacts with ATP. Positions 139 and 150 each coordinate AMP. Residue Ala-178 coordinates ATP.

It belongs to the adenylate kinase family. Monomer.

The protein localises to the cytoplasm. The catalysed reaction is AMP + ATP = 2 ADP. It participates in purine metabolism; AMP biosynthesis via salvage pathway; AMP from ADP: step 1/1. Its function is as follows. Catalyzes the reversible transfer of the terminal phosphate group between ATP and AMP. Plays an important role in cellular energy homeostasis and in adenine nucleotide metabolism. In Agrobacterium fabrum (strain C58 / ATCC 33970) (Agrobacterium tumefaciens (strain C58)), this protein is Adenylate kinase.